A 363-amino-acid polypeptide reads, in one-letter code: Chorismate synthase (363 aa).

2 residues coordinate NADP(+): Arg-48 and Arg-54. FMN contacts are provided by residues 131–133, 244–245, Gly-288, 303–307, and Arg-329; these read RSS, NA, and KPTSS.

The protein belongs to the chorismate synthase family. In terms of assembly, homotetramer. The cofactor is FMNH2.

The catalysed reaction is 5-O-(1-carboxyvinyl)-3-phosphoshikimate = chorismate + phosphate. Its pathway is metabolic intermediate biosynthesis; chorismate biosynthesis; chorismate from D-erythrose 4-phosphate and phosphoenolpyruvate: step 7/7. Its function is as follows. Catalyzes the anti-1,4-elimination of the C-3 phosphate and the C-6 proR hydrogen from 5-enolpyruvylshikimate-3-phosphate (EPSP) to yield chorismate, which is the branch point compound that serves as the starting substrate for the three terminal pathways of aromatic amino acid biosynthesis. This reaction introduces a second double bond into the aromatic ring system. This chain is Chorismate synthase, found in Hyphomonas neptunium (strain ATCC 15444).